The sequence spans 295 residues: Phosphoribosylaminoimidazole-succinocarboxamide synthase (295 aa).

It belongs to the SAICAR synthetase family.

The catalysed reaction is 5-amino-1-(5-phospho-D-ribosyl)imidazole-4-carboxylate + L-aspartate + ATP = (2S)-2-[5-amino-1-(5-phospho-beta-D-ribosyl)imidazole-4-carboxamido]succinate + ADP + phosphate + 2 H(+). The protein operates within purine metabolism; IMP biosynthesis via de novo pathway; 5-amino-1-(5-phospho-D-ribosyl)imidazole-4-carboxamide from 5-amino-1-(5-phospho-D-ribosyl)imidazole-4-carboxylate: step 1/2. The protein is Phosphoribosylaminoimidazole-succinocarboxamide synthase of Corynebacterium ammoniagenes (Brevibacterium ammoniagenes).